Here is a 404-residue protein sequence, read N- to C-terminus: Glucose-1-phosphate adenylyltransferase 2 (404 aa).

Residues Tyr97, Gly162, 177-178 (EK), and Ser195 contribute to the alpha-D-glucose 1-phosphate site.

This sequence belongs to the bacterial/plant glucose-1-phosphate adenylyltransferase family. Homotetramer.

The catalysed reaction is alpha-D-glucose 1-phosphate + ATP + H(+) = ADP-alpha-D-glucose + diphosphate. It functions in the pathway glycan biosynthesis; glycogen biosynthesis. Functionally, involved in the biosynthesis of ADP-glucose, a building block required for the elongation reactions to produce glycogen. Catalyzes the reaction between ATP and alpha-D-glucose 1-phosphate (G1P) to produce pyrophosphate and ADP-Glc. The sequence is that of Glucose-1-phosphate adenylyltransferase 2 from Vibrio vulnificus (strain CMCP6).